A 382-amino-acid polypeptide reads, in one-letter code: Succinate--CoA ligase [ADP-forming] subunit beta (382 aa).

An ATP-grasp domain is found at 9 to 237 (KQVFADAGIP…AAEGDELEQK (229 aa)). Residues Lys45, 52–54 (GRG), Glu91, Val94, and Glu99 contribute to the ATP site. The Mg(2+) site is built by Asn191 and Asp205. Residues Asn257 and 314 to 316 (GIT) each bind substrate.

The protein belongs to the succinate/malate CoA ligase beta subunit family. Heterotetramer of two alpha and two beta subunits. Mg(2+) serves as cofactor.

The catalysed reaction is succinate + ATP + CoA = succinyl-CoA + ADP + phosphate. It catalyses the reaction GTP + succinate + CoA = succinyl-CoA + GDP + phosphate. Its pathway is carbohydrate metabolism; tricarboxylic acid cycle; succinate from succinyl-CoA (ligase route): step 1/1. Functionally, succinyl-CoA synthetase functions in the citric acid cycle (TCA), coupling the hydrolysis of succinyl-CoA to the synthesis of either ATP or GTP and thus represents the only step of substrate-level phosphorylation in the TCA. The beta subunit provides nucleotide specificity of the enzyme and binds the substrate succinate, while the binding sites for coenzyme A and phosphate are found in the alpha subunit. The chain is Succinate--CoA ligase [ADP-forming] subunit beta from Haloarcula marismortui (strain ATCC 43049 / DSM 3752 / JCM 8966 / VKM B-1809) (Halobacterium marismortui).